The sequence spans 150 residues: Transcription antitermination protein NusB (150 aa).

This sequence belongs to the NusB family.

In terms of biological role, involved in transcription antitermination. Required for transcription of ribosomal RNA (rRNA) genes. Binds specifically to the boxA antiterminator sequence of the ribosomal RNA (rrn) operons. This Streptococcus pyogenes serotype M1 protein is Transcription antitermination protein NusB.